Consider the following 30-residue polypeptide: Photosystem I reaction center subunit XII (30 aa).

The helical transmembrane segment at Ile-7–Thr-26 threads the bilayer.

This sequence belongs to the PsaM family.

The protein localises to the plastid. Its subcellular location is the chloroplast thylakoid membrane. This is Photosystem I reaction center subunit XII from Mesostigma viride (Green alga).